Consider the following 189-residue polypeptide: MDDKKTWSTVTLRTFNQLVTSSLIGYSKKMDSMNHKMEGNAGHDHSDMHMGDGDDTCSMNMLFSWSYKNTCVVFEWWHIKTLPGLILSCLAIFGLAYLYEYLKYCVHKRQLSQRVLLPNRSLTKINQADKVSNSILYGLQVGFSFMLMLVFMTYNGWLMLAVVCGAIWGNYSWCTSYSPEIDDSSLACH.

Residues 1-81 lie on the Cytoplasmic side of the membrane; sequence MDDKKTWSTV…VVFEWWHIKT (81 aa). Residues 82 to 102 traverse the membrane as a helical segment; the sequence is LPGLILSCLAIFGLAYLYEYL. The Vacuolar segment spans residues 103-142; sequence KYCVHKRQLSQRVLLPNRSLTKINQADKVSNSILYGLQVG. Residues 143 to 163 form a helical membrane-spanning segment; the sequence is FSFMLMLVFMTYNGWLMLAVV. At 164-189 the chain is on the cytoplasmic side; it reads CGAIWGNYSWCTSYSPEIDDSSLACH.

Belongs to the copper transporter (Ctr) (TC 1.A.56) family. SLC31A subfamily. Homomultimer.

It localises to the vacuole membrane. Its function is as follows. Provides bioavailable copper via mobilization of vacuolar copper stores and export to the cytoplasm. In Saccharomyces cerevisiae (strain ATCC 204508 / S288c) (Baker's yeast), this protein is Copper transport protein CTR2 (CTR2).